The sequence spans 59 residues: Ferredoxin (59 aa).

4Fe-4S ferredoxin-type domains lie at 2–30 (GKITIVNIDDCVACGACSGTCPQSVLEVN) and 31–59 (DHVEIKNPDDCIGCGACVDACPQGVLKVE). 8 residues coordinate [4Fe-4S] cluster: C12, C15, C18, C22, C41, C44, C47, and C51.

[4Fe-4S] cluster is required as a cofactor.

Ferredoxins are iron-sulfur proteins that transfer electrons in a wide variety of metabolic reactions. This Entamoeba histolytica (strain ATCC 30459 / HM-1:IMSS / ABRM) protein is Ferredoxin.